A 546-amino-acid polypeptide reads, in one-letter code: Alpha-taxilin (546 aa).

Disordered regions lie at residues 1–170 (MKNQ…GLGK) and 482–546 (NKRV…SARA). The span at 11–21 (AKQSNPKSSPG) shows a compositional bias: polar residues. 2 stretches are compositionally biased toward basic and acidic residues: residues 70-80 (DVSEELSRQLE) and 143-158 (EEIR…DHRR). Ser72 carries the post-translational modification Phosphoserine. Residues 186-491 (EEKLAALCKK…NKRVQDLSAG (306 aa)) adopt a coiled-coil conformation. Position 515 is a phosphoserine (Ser515). The segment covering 530-546 (TEASGQTGPQEPTSARA) has biased composition (polar residues).

Belongs to the taxilin family. Binds to the C-terminal coiled coil region of syntaxin family members STX1A, STX3A and STX4A, but not when these proteins are complexed with SNAP25, VAMP2 or STXBP1, suggesting that it interacts with syntaxins that do not form the SNARE complex. As to expression, ubiquitous, with much higher expression in heart, kidney, liver and pancreas.

In terms of biological role, may be involved in intracellular vesicle traffic and potentially in calcium-dependent exocytosis in neuroendocrine cells. The protein is Alpha-taxilin (TXLNA) of Homo sapiens (Human).